Reading from the N-terminus, the 148-residue chain is Nucleoside diphosphate kinase 1 (148 aa).

6 residues coordinate ATP: Lys-9, Phe-57, Arg-85, Thr-91, Arg-102, and Asn-112. His-115 functions as the Pros-phosphohistidine intermediate in the catalytic mechanism.

The protein belongs to the NDK family. Mg(2+) serves as cofactor.

The enzyme catalyses a 2'-deoxyribonucleoside 5'-diphosphate + ATP = a 2'-deoxyribonucleoside 5'-triphosphate + ADP. It carries out the reaction a ribonucleoside 5'-diphosphate + ATP = a ribonucleoside 5'-triphosphate + ADP. Functionally, major role in the synthesis of nucleoside triphosphates other than ATP. The ATP gamma phosphate is transferred to the NDP beta phosphate via a ping-pong mechanism, using a phosphorylated active-site intermediate. The polypeptide is Nucleoside diphosphate kinase 1 (Nicotiana tabacum (Common tobacco)).